Consider the following 117-residue polypeptide: NADH-ubiquinone oxidoreductase chain 3 (117 aa).

A run of 3 helical transmembrane segments spans residues Ile-4–Ile-24, Phe-57–Leu-77, and Trp-88–Trp-108.

The protein belongs to the complex I subunit 3 family.

It is found in the mitochondrion membrane. It catalyses the reaction a ubiquinone + NADH + 5 H(+)(in) = a ubiquinol + NAD(+) + 4 H(+)(out). Functionally, core subunit of the mitochondrial membrane respiratory chain NADH dehydrogenase (Complex I) that is believed to belong to the minimal assembly required for catalysis. Complex I functions in the transfer of electrons from NADH to the respiratory chain. The immediate electron acceptor for the enzyme is believed to be ubiquinone. The protein is NADH-ubiquinone oxidoreductase chain 3 (ND3) of Heterololigo bleekeri (Spear squid).